The chain runs to 86 residues: Progonadoliberin IIA (86 aa).

The signal sequence occupies residues 1 to 24 (MVHICRLFVVMGMLLCLSAQFASS). A Pyrrolidone carboxylic acid modification is found at Q25. The residue at position 34 (G34) is a Glycine amide.

It belongs to the GnRH family. Olfactory bulbs, hypothalamus and telencephalon, midbrain and posterior brain areas.

The protein resides in the secreted. Functionally, stimulates the secretion of gonadotropins. This is Progonadoliberin IIA (gnrh2a) from Carassius auratus (Goldfish).